The chain runs to 749 residues: uncharacterized protein (749 aa).

Disordered regions lie at residues 1–58 (MGTV…QPSN), 124–170 (DANA…PSPL), 200–291 (SRFS…PPVS), and 385–405 (YTWSRHSTSGPSRSTVLNPST). Residues 13–24 (LNNGLSSNNGSS) show a composition bias toward low complexity. Composition is skewed to polar residues over residues 149 to 159 (KSASKDSNAFN), 238 to 252 (ESKTSPFATRRPSLN), 265 to 275 (LNYQNSSLNPS), and 388 to 405 (SRHSTSGPSRSTVLNPST). In terms of domain architecture, PSP1 C-terminal spans 644-729 (KRILRKAQPH…YKTRIWMCAV (86 aa)).

This is an uncharacterized protein from Schizosaccharomyces pombe (strain 972 / ATCC 24843) (Fission yeast).